The chain runs to 423 residues: Lipase member M (423 aa).

A signal peptide spans 1–33; it reads MLETLSRQWIVSHRMEMWLLILVAYMFQRNVNS. A glycan (N-linked (GlcNAc...) asparagine) is linked at asparagine 48. Positions 92–392 constitute an AB hydrolase-1 domain; sequence PVVLLQHGLV…EWAHVDFIWG (301 aa). Serine 186 serves as the catalytic Nucleophile. Cysteine 260 and cysteine 269 are joined by a disulfide. Catalysis depends on charge relay system residues aspartate 357 and histidine 386.

It belongs to the AB hydrolase superfamily. Lipase family. Exclusively expressed in the epidermis within the granular keratinocytes.

Its subcellular location is the secreted. Functionally, plays a highly specific role in the last step of keratinocyte differentiation. May have an essential function in lipid metabolism of the most differentiated epidermal layers. The polypeptide is Lipase member M (LIPM) (Homo sapiens (Human)).